The primary structure comprises 59 residues: Potassium channel toxin alpha-KTx 4.7 (59 aa).

Positions 1–22 (MKAFYGILIIFILISMLDLSQQ) are cleaved as a signal peptide. Cystine bridges form between C29-C50, C35-C55, and C39-C57. The interaction with Ca(2+)-activated K(+) channels stretch occupies residues 48 to 55 (GKCMNGKC).

Belongs to the short scorpion toxin superfamily. Potassium channel inhibitor family. Alpha-KTx 04 subfamily. Expressed by the venom gland.

Its subcellular location is the secreted. Functionally, potently blocks Kv1.1/KCNA1 (85%), Kv1.2/KCNA2 (91%), Kv1.3/KCNA3 (89%), Kv1.6/KCNA6 (94%), and Shaker (97%). The protein is Potassium channel toxin alpha-KTx 4.7 of Tityus stigmurus (Brazilian scorpion).